Here is a 335-residue protein sequence, read N- to C-terminus: N-acetylglucosaminyl-phosphatidylinositol de-N-acetylase (335 aa).

The helical transmembrane segment at 3 to 23 (SAFTFLSLAIFPLALFIFWTL) threads the bilayer. Residues asparagine 128 and asparagine 153 are each glycosylated (N-linked (GlcNAc...) asparagine).

Belongs to the PIGL family.

The protein resides in the endoplasmic reticulum membrane. The enzyme catalyses a 6-(N-acetyl-alpha-D-glucosaminyl)-1-(1,2-diacyl-sn-glycero-3-phospho)-1D-myo-inositol + H2O = a 6-(alpha-D-glucosaminyl)-1-(1,2-diacyl-sn-glycero-3-phospho)-1D-myo-inositol + acetate. It functions in the pathway glycolipid biosynthesis; glycosylphosphatidylinositol-anchor biosynthesis. In terms of biological role, involved in the second step of GPI biosynthesis. De-N-acetylation of N-acetylglucosaminyl-phosphatidylinositol. In Arthroderma benhamiae (strain ATCC MYA-4681 / CBS 112371) (Trichophyton mentagrophytes), this protein is N-acetylglucosaminyl-phosphatidylinositol de-N-acetylase.